Consider the following 146-residue polypeptide: Cytochrome b5 type B (146 aa).

Residues methionine 1–glutamate 11 constitute a propeptide that is removed on maturation. Serine 19 is subject to Phosphoserine. The Cytochrome b5 heme-binding domain maps to valine 20–histidine 96. The residue at position 30 (lysine 30) is an N6-acetyllysine. Serine 33 is subject to Phosphoserine. Residues histidine 55 and histidine 79 each coordinate heme. Phosphoserine is present on serine 80. The helical transmembrane segment at tryptophan 119–tyrosine 136 threads the bilayer.

This sequence belongs to the cytochrome b5 family. Component of a complex composed of cytochrome b5, NADH-cytochrome b5 reductase (CYB5R3) and MTARC2.

The protein localises to the mitochondrion outer membrane. Functionally, cytochrome b5 is a membrane-bound hemoprotein functioning as an electron carrier for several membrane-bound oxygenases. The chain is Cytochrome b5 type B (Cyb5b) from Mus musculus (Mouse).